We begin with the raw amino-acid sequence, 482 residues long: MDQLHVFFFPFLANGHILPTIDMAKLFSSRGVKATLITTHNNSAIFLKAINRSKILGFDISVLTIKFPSAEFGLPEGYETADQARSIDMMDEFFRACILLQEPLEELLKEHRPQALVADLFFYWANDAAAKFGIPRLLFHGSSSFAMIAAESVRRNKPYKNLSSDSDPFVVPDIPDKIILTKSQVPTPDETEENNTHITEMWKNISESENDCYGVIVNSFYELEPDYVDYCKNVLGRRAWHIGPLSLCNNEGEDVAERGKKSDIDAHECLNWLDSKNPDSVVYVCFGSMANFNAAQLHELAMGLEESGQEFIWVVRTCVDEEDESKWFPDGFEKRVQENNKGLIIKGWAPQVLILEHEAVGAFVSHCGWNSTLEGICGGVAMVTWPLFAEQFYNEKLMTDILRTGVSVGSLQWSRVTTSAVVVKRESISKAVRRLMAEEEGVDIRNRAKALKEKAKKAVEGGGSSYSDLSALLVELSSYPHN.

The active-site Proton acceptor is the histidine 16. Histidine 16 serves as a coordination point for an anthocyanidin. The active-site Charge relay is the aspartate 119. UDP-alpha-D-glucose is bound by residues alanine 349, glutamine 351, histidine 366, tryptophan 369, asparagine 370, serine 371, and glutamate 374. Residue alanine 389 coordinates an anthocyanidin. Glutamate 390 and glutamine 391 together coordinate UDP-alpha-D-glucose.

This sequence belongs to the UDP-glycosyltransferase family. Post-translationally, the N-terminus is blocked. Abundant in petals and barely detected in leaves.

It catalyses the reaction delphinidin 3,5-bis-O-beta-D-glucoside + UDP-alpha-D-glucose = delphinidin 3,3',5-tri-O-beta-D-glucoside + UDP + H(+). Functionally, specifically glucosylates the 3'-hydroxy group of delphinidin 3,5-di-O-glucoside to produce gentiodelphin. Shows a strict specificity for UDP-glucose as donor. In Gentiana triflora (Clustered gentian), this protein is Anthocyanin 3'-O-beta-glucosyltransferase.